The following is a 264-amino-acid chain: Thymidylate synthase (264 aa).

Arg-21 is a dUMP binding site. A (6R)-5,10-methylene-5,6,7,8-tetrahydrofolate-binding site is contributed by His-51. A dUMP-binding site is contributed by 126-127 (RR). Cys-146 serves as the catalytic Nucleophile. DUMP-binding positions include 166 to 169 (RSVD), Asn-177, and 207 to 209 (HLY). Asp-169 serves as a coordination point for (6R)-5,10-methylene-5,6,7,8-tetrahydrofolate. Ala-263 is a (6R)-5,10-methylene-5,6,7,8-tetrahydrofolate binding site.

This sequence belongs to the thymidylate synthase family. Bacterial-type ThyA subfamily. As to quaternary structure, homodimer.

The protein resides in the cytoplasm. It carries out the reaction dUMP + (6R)-5,10-methylene-5,6,7,8-tetrahydrofolate = 7,8-dihydrofolate + dTMP. It participates in pyrimidine metabolism; dTTP biosynthesis. In terms of biological role, catalyzes the reductive methylation of 2'-deoxyuridine-5'-monophosphate (dUMP) to 2'-deoxythymidine-5'-monophosphate (dTMP) while utilizing 5,10-methylenetetrahydrofolate (mTHF) as the methyl donor and reductant in the reaction, yielding dihydrofolate (DHF) as a by-product. This enzymatic reaction provides an intracellular de novo source of dTMP, an essential precursor for DNA biosynthesis. The polypeptide is Thymidylate synthase (Geobacillus kaustophilus (strain HTA426)).